The chain runs to 167 residues: Gametocyte-specific factor 1 homolog (167 aa).

2 CHHC U11-48K-type zinc fingers span residues M1–Y28 and L34–N61. Zn(2+) is bound by residues C4, H10, H20, C24, C37, H43, H53, and C57. Basic and acidic residues predominate over residues E128–R161. Residues E128 to Q167 form a disordered region.

The protein belongs to the UPF0224 (FAM112) family. Interacts with piwi.

The protein resides in the nucleus. In terms of biological role, acts via the piwi-interacting RNA (piRNA) pathway which mediates the repression of transposable elements during meiosis by forming complexes composed of piRNAs and piwi proteins and governs the methylation and subsequent repression of transposons. Required for repression of transposons and neighboring genes in ovarian somatic and germline cells. This chain is Gametocyte-specific factor 1 homolog, found in Drosophila melanogaster (Fruit fly).